The sequence spans 214 residues: uncharacterized protein (214 aa).

Y129 functions as the Proton acceptor in the catalytic mechanism.

It belongs to the NAD(P)-dependent epimerase/dehydratase family.

This is an uncharacterized protein from Bacillus subtilis (strain 168).